The sequence spans 201 residues: Potassium-transporting ATPase KdpC subunit (201 aa).

Residues 12-34 (LLALTMITGLAYPLAVTGLATVL) form a helical membrane-spanning segment. The segment at 69–102 (RPSATVAPDPADSSKTVSAPYNAANSGGSNLGPT) is disordered. The span at 81–101 (SSKTVSAPYNAANSGGSNLGP) shows a compositional bias: polar residues.

This sequence belongs to the KdpC family. As to quaternary structure, the system is composed of three essential subunits: KdpA, KdpB and KdpC.

It is found in the cell inner membrane. Functionally, part of the high-affinity ATP-driven potassium transport (or Kdp) system, which catalyzes the hydrolysis of ATP coupled with the electrogenic transport of potassium into the cytoplasm. This subunit acts as a catalytic chaperone that increases the ATP-binding affinity of the ATP-hydrolyzing subunit KdpB by the formation of a transient KdpB/KdpC/ATP ternary complex. The sequence is that of Potassium-transporting ATPase KdpC subunit from Rhodopseudomonas palustris (strain TIE-1).